Consider the following 616-residue polypeptide: GDP-Man:Man(3)GlcNAc(2)-PP-Dol alpha-1,2-mannosyltransferase (616 aa).

A topological domain (lumenal) is located at residue M1. A helical membrane pass occupies residues 2–21 (GYLVVIGVIACVAYGILQVV). Over 22-199 (STVLPRLLLV…RLIDGDYWKR (178 aa)) the chain is Cytoplasmic. Positions 200-220 (FTLIGQLFGSMVLSWEAMFEL) form an intramembrane region, helical. At 221 to 460 (SPDVWIDTIG…FGLNAMWNEH (240 aa)) the chain is on the cytoplasmic side. The segment at residues 461 to 481 (FGIGVVEYMSRGVIPLCHASA) is an intramembrane region (helical). Topologically, residues 482 to 616 (GPLLDIVTNW…ERRSGIEKVY (135 aa)) are cytoplasmic.

This sequence belongs to the glycosyltransferase group 1 family.

Its subcellular location is the endoplasmic reticulum membrane. It carries out the reaction an alpha-D-Man-(1-&gt;3)-[alpha-D-Man-(1-&gt;6)]-beta-D-Man-(1-&gt;4)-beta-D-GlcNAc-(1-&gt;4)-alpha-D-GlcNAc-diphospho-di-trans,poly-cis-dolichol + 2 GDP-alpha-D-mannose = an alpha-D-Man-(1-&gt;2)-alpha-D-Man-(1-&gt;2)-alpha-D-Man-(1-&gt;3)-[alpha-D-Man-(1-&gt;6)]-beta-D-Man-(1-&gt;4)-beta-D-GlcNAc-(1-&gt;4)-alpha-D-GlcNAc-diphospho-di-trans,poly-cis-dolichol + 2 GDP + 2 H(+). It functions in the pathway protein modification; protein glycosylation. GDP-Man:Man(3)GlcNAc(2)-PP-Dol alpha-1,2-mannosyltransferase that operates in the biosynthetic pathway of dolichol-linked oligosaccharides, the glycan precursors employed in protein asparagine (N)-glycosylation. The assembly of dolichol-linked oligosaccharides begins on the cytosolic side of the endoplasmic reticulum membrane and finishes in its lumen. The sequential addition of sugars to dolichol pyrophosphate produces dolichol-linked oligosaccharides containing fourteen sugars, including two GlcNAcs, nine mannoses and three glucoses. Once assembled, the oligosaccharide is transferred from the lipid to nascent proteins by oligosaccharyltransferases. Catalyzes, on the cytoplasmic face of the endoplasmic reticulum, the addition of the fourth and fifth mannose residues to the dolichol-linked oligosaccharide chain, to produce Man(5)GlcNAc(2)-PP-dolichol core oligosaccharide. The chain is GDP-Man:Man(3)GlcNAc(2)-PP-Dol alpha-1,2-mannosyltransferase (ALG11) from Debaryomyces hansenii (strain ATCC 36239 / CBS 767 / BCRC 21394 / JCM 1990 / NBRC 0083 / IGC 2968) (Yeast).